The chain runs to 415 residues: Putative serpin-Z6C (415 aa).

The interval 357–381 (GTEAAAATAVCLTFASAAPSSRRPA) is RCL.

The protein belongs to the serpin family.

In terms of biological role, probable serine protease inhibitor. The chain is Putative serpin-Z6C from Oryza sativa subsp. japonica (Rice).